Here is a 1553-residue protein sequence, read N- to C-terminus: Mediator of RNA polymerase II transcription subunit 14 (1553 aa).

2 short sequence motifs (LXXLL motif) span residues 55-59 (LAELL) and 472-476 (LPALL). Serine 615 is modified (phosphoserine). Disordered stretches follow at residues 699–723 (FATQ…GTSG), 1006–1199 (ASHE…LNRP), and 1513–1553 (GVGS…GGPQ). Serine 1015 carries the phosphoserine modification. Composition is skewed to low complexity over residues 1024–1039 (GGPS…GSSP) and 1065–1080 (PSSS…HPSA). Positions 1081 to 1090 (GAGGGSGPQG) are enriched in gly residues. Residues 1099–1108 (PPAPHMPHPS) are compositionally biased toward pro residues. A compositionally biased stretch (polar residues) spans 1131 to 1155 (GPNTLYMQSHQDSPFTAMSPANNNW). The span at 1159–1169 (PSMPRPSPRPG) shows a compositional bias: pro residues. Residues 1177–1193 (TGGGAGVAGGTDRGGSR) are compositionally biased toward gly residues. Positions 1515-1534 (GSSPNPMMPMQQLPQQVGPQ) are enriched in low complexity.

It belongs to the Mediator complex subunit 14 family. In terms of assembly, component of the Mediator complex, which may include CDK8, MED4, MED6, MED11, MED14, MED17, MED18, MED20, MED21, MED22, MED27, MED28, MED30 and MED31.

Its subcellular location is the nucleus. In terms of biological role, component of the Mediator complex, a coactivator involved in the regulated transcription of nearly all RNA polymerase II-dependent genes. Mediator functions as a bridge to convey information from gene-specific regulatory proteins to the basal RNA polymerase II transcription machinery. Mediator is recruited to promoters by direct interactions with regulatory proteins and serves as a scaffold for the assembly of a functional pre-initiation complex with RNA polymerase II and the general transcription factors. Required for activated transcription of the MtnA, MtnB and MtnD genes. The chain is Mediator of RNA polymerase II transcription subunit 14 (MED14) from Drosophila melanogaster (Fruit fly).